Consider the following 391-residue polypeptide: Enoyl-CoA delta isomerase 2 (391 aa).

Residues Met-1–Ala-36 constitute a mitochondrion transit peptide. Residues Thr-37–Ala-122 enclose the ACB domain. Lys-49 bears the N6-acetyllysine; alternate mark. At Lys-49 the chain carries N6-succinyllysine; alternate. Lys-53 is modified (N6-succinyllysine). Lys-60 bears the N6-acetyllysine; alternate mark. An N6-succinyllysine; alternate modification is found at Lys-60. Tyr-64–Lys-68 serves as a coordination point for an acyl-CoA. An N6-succinyllysine mark is found at Lys-68, Lys-79, and Lys-88. Lys-90 bears the N6-acetyllysine; alternate mark. An N6-succinyllysine; alternate modification is found at Lys-90. Lys-90 is a binding site for an acyl-CoA. Phosphoserine is present on Ser-99. Tyr-109 serves as a coordination point for an acyl-CoA. Phosphoserine is present on Ser-117. An N6-succinyllysine mark is found at Lys-127 and Lys-159. Positions Thr-149–Pro-319 are ECH-like. Residue Ser-196–Leu-200 participates in substrate binding. The residue at position 286 (Lys-286) is an N6-succinyllysine. A Microbody targeting signal motif is present at residues Pro-389–Leu-391.

It in the C-terminal section; belongs to the enoyl-CoA hydratase/isomerase family. As to expression, liver (at protein level).

Its subcellular location is the peroxisome matrix. It is found in the mitochondrion. It catalyses the reaction a (3Z)-enoyl-CoA = a 4-saturated (2E)-enoyl-CoA. The enzyme catalyses a (3E)-enoyl-CoA = a 4-saturated (2E)-enoyl-CoA. The catalysed reaction is (2E)-tetradecenoyl-CoA = (3Z)-tetradecenoyl-CoA. It carries out the reaction (3E)-tetradecenoyl-CoA = (2E)-tetradecenoyl-CoA. It catalyses the reaction (3E)-octenoyl-CoA = (2E)-octenoyl-CoA. The enzyme catalyses (3Z)-octenoyl-CoA = (2E)-octenoyl-CoA. The catalysed reaction is (3E)-nonenoyl-CoA = (2E)-nonenoyl-CoA. The protein operates within lipid metabolism; fatty acid beta-oxidation. In terms of biological role, able to isomerize both 3-cis and 3-trans double bonds into the 2-trans form in a range of enoyl-CoA species. Has a preference for 3-trans substrates. The protein is Enoyl-CoA delta isomerase 2 of Rattus norvegicus (Rat).